The primary structure comprises 341 residues: Cell wall mannoprotein PIR1 (341 aa).

The signal sequence occupies residues 1–18 (MQYKKSLVASALVTTSLA). The propeptide occupies 19-63 (AYAPKDPWSTLTPSATYKGGITDYSSTFGIAVEPIATTASSKAKR). PIR1/2/3 repeat units follow at residues 64 to 82 (AAAI…TKTT), 83 to 101 (AAAV…TKTK), 102 to 120 (AAAV…TKTT), 126 to 144 (AAAV…TKTK), 145 to 163 (AAAV…TKTT), 164 to 182 (AAAV…TKTT), 183 to 201 (AAAV…TNTT), and 202 to 220 (VAPV…TLTS).

The protein belongs to the PIR protein family. In terms of processing, covalently linked to beta-1,3-glucan of the inner cell wall layer via an alkali-sensitive ester linkage between the gamma-carboxyl group of glutamic acids, arising from specific glutamines within the PIR1/2/3 repeats, and hydroxyl groups of glucoses of beta-1,3-glucan chains. Post-translationally, O-glycosylated. Extensively O-mannosylated.

Its subcellular location is the secreted. It localises to the cell wall. Component of the outer cell wall layer. Required for stability of the cell wall and for optimal growth. Required for resistance against several antifungal and cell wall-perturbing agents and for tolerance to heat shock. The polypeptide is Cell wall mannoprotein PIR1 (PIR1) (Saccharomyces cerevisiae (strain RM11-1a) (Baker's yeast)).